Reading from the N-terminus, the 671-residue chain is tRNA(Met) cytidine acetyltransferase TmcA (671 aa).

ATP contacts are provided by residues glutamine 180, 202 to 211 (GRGKSALAGQ), and arginine 319. One can recognise an N-acetyltransferase domain in the interval 356 to 531 (QTLWQSDPET…SGCYTAMALL (176 aa)). Acetyl-CoA is bound by residues 461–463 (IAV), 468–474 (QREGTGR), glutamate 499, and arginine 506.

It belongs to the RNA cytidine acetyltransferase family. TmcA subfamily.

It localises to the cytoplasm. The catalysed reaction is cytidine(34) in elongator tRNA(Met) + acetyl-CoA + ATP + H2O = N(4)-acetylcytidine(34) in elongator tRNA(Met) + ADP + phosphate + CoA + H(+). The enzyme catalyses 2-hydroxyisobutanoyl-CoA + L-lysyl-[protein] = N(6)-(2-hydroxyisobutanoyl)-L-lysyl-[protein] + CoA + H(+). ATP/GTP hydrolysis is stimulated by the addition of acetyl-CoA and tRNA(Met). Binding of acetyl-CoA to TmcA activates both ATPase and tRNA-binding activities. ATP promotes the 2-hydroxyisobutyryltransferase activity. Functionally, catalyzes the formation of N(4)-acetylcytidine (ac(4)C) at the wobble position of tRNA(Met), by using acetyl-CoA as an acetyl donor and ATP (or GTP). It recognizes the wobble base of tRNA(Met), thus distinguishing between tRNA(Met) and the structurally similar tRNA(Ile2). Could use an RNA helicase motor driven by ATP hydrolysis to deliver the wobble base of tRNA(Met) to the acetyltransferase domain of TmcA. In terms of biological role, also functions as a lysine 2-hydroxyisobutyryltransferase to regulate transcription. Can specifically catalyze the 2-hydroxyisobutyrylation (Khib) of the DNA-binding protein H-NS. Hydroxyisobutyrylation of H-NS decreases its DNA-binding activity, promotes the expression of acid-resistance genes and enhances bacterial survival under extreme acid stress. In Escherichia coli (strain K12), this protein is tRNA(Met) cytidine acetyltransferase TmcA.